Reading from the N-terminus, the 537-residue chain is Beta-galactoside alpha-2,6-sialyltransferase 2 (537 aa).

Over 1 to 10 (MKSWVRQGRR) the chain is Cytoplasmic. A helical; Signal-anchor for type II membrane protein membrane pass occupies residues 11–31 (LVLVGMLAWVLLFLALLSYFL). Over 32 to 537 (DARVNEPLTS…PGFSTVDCDI (506 aa)) the chain is Lumenal. Disordered regions lie at residues 83–117 (TRDE…PEGI) and 134–202 (GTEN…GDSS). The segment covering 134–145 (GTENIGSQSDPV) has biased composition (polar residues). Residues 166 to 185 (EEEEEEEEEEERQENEDEDV) show a composition bias toward acidic residues. 3 cysteine pairs are disulfide-bonded: Cys-265–Cys-535, Cys-312–Cys-464, and Cys-482–Cys-493. Residues Asn-353 and Asn-373 are each glycosylated (N-linked (GlcNAc...) asparagine).

The protein belongs to the glycosyltransferase 29 family.

The protein resides in the golgi apparatus. It localises to the golgi stack membrane. It carries out the reaction a beta-D-galactoside + CMP-N-acetyl-beta-neuraminate = an N-acetyl-alpha-neuraminyl-(2-&gt;6)-beta-D-galactosyl derivative + CMP + H(+). In terms of biological role, transfers sialic acid from the donor of substrate CMP-sialic acid to galactose containing acceptor substrates. This is Beta-galactoside alpha-2,6-sialyltransferase 2 (st6gal2) from Takifugu rubripes (Japanese pufferfish).